Consider the following 376-residue polypeptide: Chaperone protein DnaJ (376 aa).

In terms of domain architecture, J spans 4–70; the sequence is DYYQILGVSK…QKRAAYDRFG (67 aa). A CR-type zinc finger spans residues 139 to 217; that stretch reads GVEKNISFSS…CHGLGRYHKQ (79 aa). Zn(2+)-binding residues include cysteine 152, cysteine 155, cysteine 169, cysteine 172, cysteine 191, cysteine 194, cysteine 205, and cysteine 208. CXXCXGXG motif repeat units follow at residues 152-159, 169-176, 191-198, and 205-212; these read CDTCHGSG, CDACGGVG, CHKCQGNG, and CKKCHGLG.

Belongs to the DnaJ family. Homodimer. Zn(2+) is required as a cofactor.

The protein localises to the cytoplasm. Functionally, participates actively in the response to hyperosmotic and heat shock by preventing the aggregation of stress-denatured proteins and by disaggregating proteins, also in an autonomous, DnaK-independent fashion. Unfolded proteins bind initially to DnaJ; upon interaction with the DnaJ-bound protein, DnaK hydrolyzes its bound ATP, resulting in the formation of a stable complex. GrpE releases ADP from DnaK; ATP binding to DnaK triggers the release of the substrate protein, thus completing the reaction cycle. Several rounds of ATP-dependent interactions between DnaJ, DnaK and GrpE are required for fully efficient folding. Also involved, together with DnaK and GrpE, in the DNA replication of plasmids through activation of initiation proteins. The chain is Chaperone protein DnaJ from Rickettsia bellii (strain OSU 85-389).